Here is a 152-residue protein sequence, read N- to C-terminus: Nucleoside diphosphate kinase B (152 aa).

The interval 1–66 (MANLERTFIA…DRPFFPGLVK (66 aa)) is interaction with AKAP13. Residues lysine 12, phenylalanine 60, arginine 88, threonine 94, arginine 105, and asparagine 115 each contribute to the ATP site. Histidine 118 acts as the Pros-phosphohistidine intermediate in catalysis.

The protein belongs to the NDK family. In terms of assembly, hexamer of two different chains: An and B (A6, A5B, A4B2, A3B3, A2B4, AB5, B6). Interacts with CAPN8. Interacts with AKAP13. Interacts with ITGB1BP1 (via C-terminal domain region). Interacts with BCL2L10. Mg(2+) serves as cofactor. As to expression, ubiquitously expressed.

The protein resides in the cytoplasm. The protein localises to the cell projection. Its subcellular location is the lamellipodium. It localises to the ruffle. It is found in the perinuclear region. The protein resides in the nucleus. The enzyme catalyses a 2'-deoxyribonucleoside 5'-diphosphate + ATP = a 2'-deoxyribonucleoside 5'-triphosphate + ADP. It catalyses the reaction a ribonucleoside 5'-diphosphate + ATP = a ribonucleoside 5'-triphosphate + ADP. It carries out the reaction ATP + protein L-histidine = ADP + protein N-phospho-L-histidine.. Major role in the synthesis of nucleoside triphosphates other than ATP. The ATP gamma phosphate is transferred to the NDP beta phosphate via a ping-pong mechanism, using a phosphorylated active-site intermediate. Negatively regulates Rho activity by interacting with AKAP13/LBC. Acts as a transcriptional activator of the MYC gene; binds DNA non-specifically. Binds to both single-stranded guanine- and cytosine-rich strands within the nuclease hypersensitive element (NHE) III(1) region of the MYC gene promoter. Does not bind to duplex NHE III(1). Has G-quadruplex (G4) DNA-binding activity, which is independent of its nucleotide-binding and kinase activity. Binds both folded and unfolded G4 with similar low nanomolar affinities. Stabilizes folded G4s regardless of whether they are prefolded or not. Exhibits histidine protein kinase activity. In Homo sapiens (Human), this protein is Nucleoside diphosphate kinase B (NME2).